The primary structure comprises 358 residues: Probable protein phosphatase 2C 68 (358 aa).

Residues 74-352 (RHGAASVAGR…DNISVVVVDL (279 aa)) enclose the PPM-type phosphatase domain. 4 residues coordinate Mn(2+): D117, G118, D298, and D343.

Belongs to the PP2C family. Requires Mg(2+) as cofactor. The cofactor is Mn(2+).

Its subcellular location is the nucleus. It is found in the cytoplasm. It localises to the cytosol. The catalysed reaction is O-phospho-L-seryl-[protein] + H2O = L-seryl-[protein] + phosphate. The enzyme catalyses O-phospho-L-threonyl-[protein] + H2O = L-threonyl-[protein] + phosphate. Involved in the regulation of abiotic stress responses. Acts as a negative regulator of abscisic acid (ABA) signaling and positive regulator of abiotic stress signaling. May be involved in panicle development. The chain is Probable protein phosphatase 2C 68 from Oryza sativa subsp. japonica (Rice).